A 195-amino-acid polypeptide reads, in one-letter code: MKIGVLALQGAFREHLNMLGTLGAEAVEVRKAEELPELSGLIIPGGESTTITKLLDIFGMAEPIKALAKKGMPIWGTCAGMICLAKELPGDISGVKPLGLMDITVRRNAFGRQVNSFEAMLKVKGLDKADFPAVFIRAPLVEKTGKGVEILSKLPDGTIVAVRENNLLAISFHPELSGDNRFHRYFVQMAKTYKA.

L-glutamine is bound at residue 46–48 (GES). Cys-78 functions as the Nucleophile in the catalytic mechanism. Residues Arg-107 and 136–137 (IR) each bind L-glutamine. Catalysis depends on charge relay system residues His-173 and Glu-175.

Belongs to the glutaminase PdxT/SNO family. In terms of assembly, in the presence of PdxS, forms a dodecamer of heterodimers. Only shows activity in the heterodimer.

It catalyses the reaction aldehydo-D-ribose 5-phosphate + D-glyceraldehyde 3-phosphate + L-glutamine = pyridoxal 5'-phosphate + L-glutamate + phosphate + 3 H2O + H(+). The enzyme catalyses L-glutamine + H2O = L-glutamate + NH4(+). It participates in cofactor biosynthesis; pyridoxal 5'-phosphate biosynthesis. In terms of biological role, catalyzes the hydrolysis of glutamine to glutamate and ammonia as part of the biosynthesis of pyridoxal 5'-phosphate. The resulting ammonia molecule is channeled to the active site of PdxS. This is Pyridoxal 5'-phosphate synthase subunit PdxT from Dehalococcoides mccartyi (strain ATCC BAA-2100 / JCM 16839 / KCTC 5957 / BAV1).